Reading from the N-terminus, the 363-residue chain is Phosphoserine aminotransferase (363 aa).

L-glutamate is bound at residue arginine 42. Tryptophan 105, threonine 155, aspartate 175, and glutamine 198 together coordinate pyridoxal 5'-phosphate. Lysine 199 is modified (N6-(pyridoxal phosphate)lysine). 240–241 (NT) serves as a coordination point for pyridoxal 5'-phosphate.

It belongs to the class-V pyridoxal-phosphate-dependent aminotransferase family. SerC subfamily. In terms of assembly, homodimer. It depends on pyridoxal 5'-phosphate as a cofactor.

The protein localises to the cytoplasm. The enzyme catalyses O-phospho-L-serine + 2-oxoglutarate = 3-phosphooxypyruvate + L-glutamate. The catalysed reaction is 4-(phosphooxy)-L-threonine + 2-oxoglutarate = (R)-3-hydroxy-2-oxo-4-phosphooxybutanoate + L-glutamate. It participates in amino-acid biosynthesis; L-serine biosynthesis; L-serine from 3-phospho-D-glycerate: step 2/3. The protein operates within cofactor biosynthesis; pyridoxine 5'-phosphate biosynthesis; pyridoxine 5'-phosphate from D-erythrose 4-phosphate: step 3/5. Functionally, catalyzes the reversible conversion of 3-phosphohydroxypyruvate to phosphoserine and of 3-hydroxy-2-oxo-4-phosphonooxybutanoate to phosphohydroxythreonine. The protein is Phosphoserine aminotransferase of Herminiimonas arsenicoxydans.